A 440-amino-acid chain; its full sequence is Lipopolysaccharide-processing protein LpsZ (440 aa).

It to E.coli capsule polysaccharide export protein KpsC.

It localises to the cytoplasm. Involved in the invasion of nitrogen fixation nodules. May be involved in the biosynthesis of lipopolysaccharides as an enzyme or a regulatory protein. This is Lipopolysaccharide-processing protein LpsZ (lpsZ) from Rhizobium meliloti (Ensifer meliloti).